A 322-amino-acid chain; its full sequence is Stage V sporulation protein K (322 aa).

99 to 106 (GNPGTGKT) is a binding site for ATP.

The protein belongs to the CbxX/CfxQ family.

The chain is Stage V sporulation protein K (spoVK) from Bacillus subtilis (strain 168).